The primary structure comprises 359 residues: 4-hydroxy-2-oxovalerate aldolase 1 (359 aa).

One can recognise a Pyruvate carboxyltransferase domain in the interval 23–275 (VRVTDTSLRD…KTGIDFFDIA (253 aa)). 31–32 (RD) contacts substrate. Position 32 (D32) interacts with Mn(2+). Catalysis depends on H35, which acts as the Proton acceptor. Residues S185 and H214 each coordinate substrate. H214 and H216 together coordinate Mn(2+). Y305 contacts substrate.

Belongs to the 4-hydroxy-2-oxovalerate aldolase family.

It catalyses the reaction (S)-4-hydroxy-2-oxopentanoate = acetaldehyde + pyruvate. The polypeptide is 4-hydroxy-2-oxovalerate aldolase 1 (Mycobacteroides abscessus (strain ATCC 19977 / DSM 44196 / CCUG 20993 / CIP 104536 / JCM 13569 / NCTC 13031 / TMC 1543 / L948) (Mycobacterium abscessus)).